We begin with the raw amino-acid sequence, 239 residues long: Wilms tumor protein homolog (239 aa).

The 9aaTAD signature appears at 43–51 (MTWNQMNLG). 3 consecutive C2H2-type zinc fingers follow at residues 113–137 (FMCA…SRKH), 143–167 (YQCD…QRRH), and 173–195 (FQCK…TRTH). Important for interaction with target DNA regions lie at residues 157–171 (SDQL…TGVK) and 183–191 (SRSDHLKTH). Residues 198-200 (KTS) carry the KTS motif motif. The C2H2-type 4 zinc-finger motif lies at 204–228 (FSCRWPSCQKKFARSDELVRHHNMH). A Glycyl lysine isopeptide (Lys-Gly) (interchain with G-Cter in SUMO2) cross-link involves residue Lys-234.

The protein belongs to the EGR C2H2-type zinc-finger protein family. As to quaternary structure, interacts with ZNF224 via the zinc-finger region. Interacts with WTAP, AMER1 and SRY. Homodimer. Interacts with WTIP. Interacts with actively translating polysomes. Detected in nuclear ribonucleoprotein (mRNP) particles. Interacts with U2AF2. Interacts with HNRNPU via the zinc-finger region. Interacts with CITED2.

It localises to the nucleus speckle. It is found in the nucleus. The protein localises to the nucleoplasm. Its subcellular location is the cytoplasm. In terms of biological role, transcription factor that plays an important role in cellular development and cell survival. Recognizes and binds to the DNA sequence 5'-GCG(T/G)GGGCG-3'. Regulates the expression of numerous target genes, including EPO. Plays an essential role for development of the urogenital system. It has a tumor suppressor as well as an oncogenic role in tumor formation. Function may be isoform-specific: isoforms lacking the KTS motif may act as transcription factors. Isoforms containing the KTS motif may bind mRNA and play a role in mRNA metabolism or splicing. The sequence is that of Wilms tumor protein homolog (WT1) from Sminthopsis macroura (Stripe-faced dunnart).